We begin with the raw amino-acid sequence, 36 residues long: Pancreatic polypeptide (36 aa).

Tyrosine 36 carries the tyrosine amide modification.

Belongs to the NPY family.

Its subcellular location is the secreted. Functionally, hormone secreted by pancreatic cells that acts as a regulator of pancreatic and gastrointestinal functions probably by signaling through the G protein-coupled receptor NPY4R2. This chain is Pancreatic polypeptide (PPY), found in Equus przewalskii (Przewalski's horse).